A 362-amino-acid polypeptide reads, in one-letter code: 45 kDa calcium-binding protein (362 aa).

An N-terminal signal peptide occupies residues 1–36 (MVWPWVAMASRWGPLIGLAPCCLWLLGAVLLMDASA). Asn-40 carries an N-linked (GlcNAc...) asparagine glycan. EF-hand domains are found at residues 98–133 (RSRR…KTAE) and 137–172 (EAME…SKGH). Phosphoserine is present on Ser-99. Residues Asp-111, Asn-113, Asp-115, Lys-117, Glu-122, Asp-150, Asp-152, Asp-154, His-156, and Glu-161 each contribute to the Ca(2+) site. Thr-193 is modified (phosphothreonine). 4 consecutive EF-hand domains span residues 197 to 232 (LENL…HSRG), 233 to 268 (MLRF…TVEN), 278 to 313 (WVKD…MNEY), and 314 to 349 (NALN…FTGS). Residue Asp-213 participates in Ca(2+) binding. At Thr-217 the chain carries Phosphothreonine. Ca(2+) is bound by residues Glu-220, Asp-246, Asp-248, Asp-250, Gln-252, and Glu-257. Thr-265 carries the phosphothreonine modification. Ca(2+)-binding residues include Asp-291, Asn-293, and Asp-295. Phosphothreonine is present on Thr-299. The Ca(2+) site is built by Glu-302, Asp-327, Asn-329, Asn-331, His-333, and Glu-338. The interval 309 to 362 (PMNEYNALNEAKQMIAVADENQNHHLEPEEVLKYSEFFTGSKLVDYARSVHEEF) is necessary for intracellular retention in Golgi apparatus lumen.

Belongs to the CREC family. As to quaternary structure, isoform 5 interacts with STXBP1; the interaction is enhanced in presence of calcium. Isoform 5 interacts with STX3. In terms of tissue distribution, ubiquitous. Isoform 5 is expressed in pancreas.

The protein resides in the golgi apparatus lumen. The protein localises to the cytoplasm. It localises to the cell membrane. Its subcellular location is the cell projection. It is found in the bleb. Its function is as follows. May regulate calcium-dependent activities in the endoplasmic reticulum lumen or post-ER compartment. Functionally, isoform 5 may be involved in the exocytosis of zymogens by pancreatic acini. The protein is 45 kDa calcium-binding protein (SDF4) of Homo sapiens (Human).